Here is a 353-residue protein sequence, read N- to C-terminus: 2-oxoglutarate-Fe(II) type oxidoreductase ppzD (353 aa).

In terms of domain architecture, Fe2OG dioxygenase spans 181–292; that stretch reads NTSELRLNHY…RYSVAYFGKP (112 aa). Fe cation-binding residues include histidine 208, aspartate 210, and histidine 268. Arginine 283 provides a ligand contact to 2-oxoglutarate.

The protein belongs to the iron/ascorbate-dependent oxidoreductase family. Requires Fe(2+) as cofactor.

The catalysed reaction is L-proline + 2-oxoglutarate + O2 = trans-4-hydroxy-L-proline + succinate + CO2. It catalyses the reaction L-proline + 2-oxoglutarate + O2 = trans-3-hydroxy-L-proline + succinate + CO2. It carries out the reaction D-proline + 2-oxoglutarate + O2 = cis-4-hydroxy-D-proline + succinate + CO2. It participates in secondary metabolite biosynthesis. 2-oxoglutarate-Fe(II) type oxidoreductase; part of the gene cluster that mediates the biosynthesis of pyrrolopyrazines, secondary metabolites showing insecticidal activity. Within the pathway, ppzD converts L-proline into trans-4-hydroxy-L-proline as a major product, yielding a key precursor for peramine biosynthesis. PpzD is also able to convert L-proline into trans-3-hydroxy-L-proline. The single multifunctional NRPS ppzA is sufficient to produce peramine via condensation of 1-pyrroline-5-carboxylate and arginine, N-methylation of the alpha-amino group of arginine and reduction of the thioester and the cyclization to form an iminium ion resulting in release from the peptide synthetase. Deprotonation of this intermediate and oxidation of the pyrroline ring would give rise to peramine. In Epichloe species that produce only peramine, the peramine synthetase gene is not localized in a gene cluster, in contrast to Metarhizium species that contain additional pyrrolopyrazine biosynthesis genes. The 2-oxoglutarate-Fe(II) type oxidoreductase ppzC hydroxylates peramine to yield the newly identified compound 8-hydroxyperamine whereas ppzD converts L-proline into trans-4-hydroxy-L-proline, a precursor of peramine biosynthesis. This Metarhizium rileyi (strain RCEF 4871) (Nomuraea rileyi) protein is 2-oxoglutarate-Fe(II) type oxidoreductase ppzD.